The primary structure comprises 215 residues: Large ribosomal subunit protein uL16 (215 aa).

This sequence belongs to the universal ribosomal protein uL16 family. Component of the small ribosomal subunit. Mature ribosomes consist of a small (40S) and a large (60S) subunit. The 40S subunit contains about 33 different proteins and 1 molecule of RNA (18S). The 60S subunit contains about 49 different proteins and 3 molecules of RNA (25S, 5.8S and 5S).

The polypeptide is Large ribosomal subunit protein uL16 (RPL10) (Euglena gracilis).